Reading from the N-terminus, the 593-residue chain is Serine/threonine-protein kinase SSN3 (593 aa).

Residues 90-489 enclose the Protein kinase domain; sequence YEIIGYIAAG…AIDALDHVYF (400 aa). Residue 96-104 coordinates ATP; that stretch reads IAAGTYGKV. The interval 161–199 is disordered; sequence KPSHKRFTPPNNSNSTQIRSNSGSETNVRINSSSITNNS. Residues 169-185 are compositionally biased toward polar residues; the sequence is PPNNSNSTQIRSNSGSE. Residues 186 to 199 are compositionally biased toward low complexity; the sequence is TNVRINSSSITNNS. Lysine 211 contacts ATP. Residue aspartate 312 is the Proton acceptor of the active site. Disordered regions lie at residues 517-551 and 569-593; these read DNDI…NMNG and AAVS…KKRK. Over residues 518-536 the composition is skewed to polar residues; it reads NDITNVGNDNNQANHSQKQ. The segment covering 540–551 has biased composition (low complexity); sequence GNNNNKNGNMNG. The segment covering 573 to 585 has biased composition (polar residues); sequence GNGNNPTSNTATG.

The protein belongs to the protein kinase superfamily. CMGC Ser/Thr protein kinase family. CDC2/CDKX subfamily. In terms of assembly, component of the SRB8-11 complex, a regulatory module of the Mediator complex. Mg(2+) is required as a cofactor.

The protein resides in the nucleus. The catalysed reaction is L-seryl-[protein] + ATP = O-phospho-L-seryl-[protein] + ADP + H(+). The enzyme catalyses L-threonyl-[protein] + ATP = O-phospho-L-threonyl-[protein] + ADP + H(+). It carries out the reaction [DNA-directed RNA polymerase] + ATP = phospho-[DNA-directed RNA polymerase] + ADP + H(+). In terms of biological role, component of the SRB8-11 complex. The SRB8-11 complex is a regulatory module of the Mediator complex which is itself involved in regulation of basal and activated RNA polymerase II-dependent transcription. The SRB8-11 complex may be involved in the transcriptional repression of a subset of genes regulated by Mediator. It may inhibit the association of the Mediator complex with RNA polymerase II to form the holoenzyme complex. The SRB8-11 complex phosphorylates the C-terminal domain (CTD) of the largest subunit of RNA polymerase II. This is Serine/threonine-protein kinase SSN3 (SSN3) from Kluyveromyces lactis (strain ATCC 8585 / CBS 2359 / DSM 70799 / NBRC 1267 / NRRL Y-1140 / WM37) (Yeast).